The chain runs to 289 residues: E3 ubiquitin-protein ligase MARCHF5 (289 aa).

The segment at 4 to 73 (VDEPPEKHCW…PQCGTEYRIV (70 aa)) adopts an RING-CH-type zinc-finger fold. Residues C12, C15, C31, C33, H41, C44, C63, and C66 each contribute to the Zn(2+) site. Helical transmembrane passes span 97 to 117 (FAAAGVVVGTVYWSAVTYGAV), 137 to 157 (PLFLLMGLPTIPVMLVLGKMI), 202 to 222 (LSVSRTLCGALIFPSIANLVG), and 236 to 256 (TILGGIAFVVMKGVLKVYFKQ).

It is found in the mitochondrion outer membrane. Its subcellular location is the endoplasmic reticulum membrane. It catalyses the reaction S-ubiquitinyl-[E2 ubiquitin-conjugating enzyme]-L-cysteine + [acceptor protein]-L-lysine = [E2 ubiquitin-conjugating enzyme]-L-cysteine + N(6)-ubiquitinyl-[acceptor protein]-L-lysine.. It functions in the pathway protein modification; protein ubiquitination. Functionally, mitochondrial E3 ubiquitin-protein ligase that plays a crucial role in the control of mitochondrial morphology by acting as a positive regulator of mitochondrial fission. May play a role in the prevention of cell senescence acting as a regulator of mitochondrial quality control. This is E3 ubiquitin-protein ligase MARCHF5 (marchf5) from Danio rerio (Zebrafish).